The following is a 212-amino-acid chain: ATP-dependent Clp protease proteolytic subunit (212 aa).

Residue Ser-114 is the Nucleophile of the active site. His-139 is an active-site residue.

It belongs to the peptidase S14 family. In terms of assembly, fourteen ClpP subunits assemble into 2 heptameric rings which stack back to back to give a disk-like structure with a central cavity, resembling the structure of eukaryotic proteasomes.

Its subcellular location is the cytoplasm. The catalysed reaction is Hydrolysis of proteins to small peptides in the presence of ATP and magnesium. alpha-casein is the usual test substrate. In the absence of ATP, only oligopeptides shorter than five residues are hydrolyzed (such as succinyl-Leu-Tyr-|-NHMec, and Leu-Tyr-Leu-|-Tyr-Trp, in which cleavage of the -Tyr-|-Leu- and -Tyr-|-Trp bonds also occurs).. In terms of biological role, cleaves peptides in various proteins in a process that requires ATP hydrolysis. Has a chymotrypsin-like activity. Plays a major role in the degradation of misfolded proteins. In Azoarcus sp. (strain BH72), this protein is ATP-dependent Clp protease proteolytic subunit.